The chain runs to 221 residues: Putative transmembrane protein ORF25 (221 aa).

The signal sequence occupies residues 1–23 (MTLAAKLIVLVYVALCFVNESTS). N-linked (GlcNAc...) asparagine; by host glycosylation is found at Asn19 and Asn179. Over 24–191 (QDHSNIYHET…LAKARGVPMS (168 aa)) the chain is Extracellular. The helical transmembrane segment at 192-212 (VSVISGICAIILVIFPIFITI) threads the bilayer. At 213 to 221 (ANLRRVYLH) the chain is on the cytoplasmic side.

Its subcellular location is the host membrane. This chain is Putative transmembrane protein ORF25, found in Ostreid herpesvirus 1 (isolate France) (OsHV-1).